The following is a 150-amino-acid chain: SsrA-binding protein (150 aa).

It belongs to the SmpB family.

Its subcellular location is the cytoplasm. Required for rescue of stalled ribosomes mediated by trans-translation. Binds to transfer-messenger RNA (tmRNA), required for stable association of tmRNA with ribosomes. tmRNA and SmpB together mimic tRNA shape, replacing the anticodon stem-loop with SmpB. tmRNA is encoded by the ssrA gene; the 2 termini fold to resemble tRNA(Ala) and it encodes a 'tag peptide', a short internal open reading frame. During trans-translation Ala-aminoacylated tmRNA acts like a tRNA, entering the A-site of stalled ribosomes, displacing the stalled mRNA. The ribosome then switches to translate the ORF on the tmRNA; the nascent peptide is terminated with the 'tag peptide' encoded by the tmRNA and targeted for degradation. The ribosome is freed to recommence translation, which seems to be the essential function of trans-translation. This chain is SsrA-binding protein, found in Borreliella burgdorferi (strain ATCC 35210 / DSM 4680 / CIP 102532 / B31) (Borrelia burgdorferi).